The following is a 286-amino-acid chain: tRNA (guanine-N(1)-)-methyltransferase (286 aa).

Residues Gly116 and 140-145 (IGDYVL) contribute to the S-adenosyl-L-methionine site. The segment at 232–286 (DALPPGSLTPHEEALAAEARLHAGRSAETPPPAGAAGSQAEGPPGTSPSDAAVAH) is disordered.

Belongs to the RNA methyltransferase TrmD family. In terms of assembly, homodimer.

It is found in the cytoplasm. The enzyme catalyses guanosine(37) in tRNA + S-adenosyl-L-methionine = N(1)-methylguanosine(37) in tRNA + S-adenosyl-L-homocysteine + H(+). Specifically methylates guanosine-37 in various tRNAs. The sequence is that of tRNA (guanine-N(1)-)-methyltransferase from Acidothermus cellulolyticus (strain ATCC 43068 / DSM 8971 / 11B).